The chain runs to 225 residues: Potassium-transporting ATPase KdpC subunit (225 aa).

Residues 18–38 traverse the membrane as a helical segment; the sequence is ALLVLTVVTGIVYPLVVTGVA. A disordered region spans residues 134–161; the sequence is NSVPGHPVRPEDVPADAVTSSGSGLDPD.

It belongs to the KdpC family. As to quaternary structure, the system is composed of three essential subunits: KdpA, KdpB and KdpC.

It is found in the cell membrane. In terms of biological role, part of the high-affinity ATP-driven potassium transport (or Kdp) system, which catalyzes the hydrolysis of ATP coupled with the electrogenic transport of potassium into the cytoplasm. This subunit acts as a catalytic chaperone that increases the ATP-binding affinity of the ATP-hydrolyzing subunit KdpB by the formation of a transient KdpB/KdpC/ATP ternary complex. In Streptomyces coelicolor (strain ATCC BAA-471 / A3(2) / M145), this protein is Potassium-transporting ATPase KdpC subunit.